The primary structure comprises 338 residues: Malate dehydrogenase, mitochondrial (338 aa).

The transit peptide at 1-24 (MLSALARPASAALRRSFSTSAQNN) directs the protein to the mitochondrion. NAD(+) is bound by residues 31–37 (GASGGIG) and Asp-57. Residue Ser-33 is glycosylated (O-linked (GlcNAc) serine). An N6-acetyllysine; alternate mark is found at Lys-78 and Lys-91. N6-succinyllysine; alternate occurs at positions 78 and 91. Arg-104 and Arg-110 together coordinate substrate. Residues Asn-117 and 140–142 (IAN) each bind NAD(+). Asn-142 contributes to the substrate binding site. Lys-165 is modified (N6-acetyllysine). Residue Arg-176 participates in substrate binding. Residue Lys-185 is modified to N6-acetyllysine; alternate. Position 185 is an N6-succinyllysine; alternate (Lys-185). His-200 serves as the catalytic Proton acceptor. N6-succinyllysine is present on Lys-203. 2 positions are modified to N6-acetyllysine; alternate: Lys-215 and Lys-239. 2 positions are modified to N6-succinyllysine; alternate: Lys-215 and Lys-239. An N6-malonyllysine; alternate modification is found at Lys-239. Position 246 is a phosphoserine (Ser-246). Met-251 is an NAD(+) binding site. N6-succinyllysine is present on Lys-269. N6-acetyllysine; alternate occurs at positions 296, 301, 307, 314, and 324. N6-succinyllysine; alternate is present on residues Lys-296, Lys-301, Lys-307, Lys-314, and Lys-324. Lys-307 bears the N6-malonyllysine; alternate mark. The residue at position 326 (Ser-326) is a Phosphoserine. N6-acetyllysine; alternate is present on residues Lys-328, Lys-329, and Lys-335. Lys-328 is subject to N6-succinyllysine; alternate. Lys-329 carries the post-translational modification N6-malonyllysine; alternate. Lys-335 carries the post-translational modification N6-succinyllysine; alternate.

The protein belongs to the LDH/MDH superfamily. MDH type 1 family. Homodimer. In terms of processing, acetylation is enhanced by up to 67% after treatment either with trichostin A (TSA) or with nicotinamide (NAM) with the appearance of tri- and tetraacetylations. Glucose also increases acetylation by about 60%.

The protein resides in the mitochondrion matrix. The catalysed reaction is (S)-malate + NAD(+) = oxaloacetate + NADH + H(+). Enzyme activity is enhanced by acetylation. In Homo sapiens (Human), this protein is Malate dehydrogenase, mitochondrial (MDH2).